The primary structure comprises 141 residues: Cholinesterase (141 aa).

N-linked (GlcNAc...) asparagine glycosylation is present at Asn-39. 49–50 serves as a coordination point for substrate; it reads GG. Residue Ser-131 is the Acyl-ester intermediate of the active site. Ser-131 is modified (phosphoserine).

This sequence belongs to the type-B carboxylesterase/lipase family. In terms of assembly, homotetramer; disulfide-linked. Dimer of dimers. As to expression, present in most cells except erythrocytes.

It is found in the secreted. The enzyme catalyses an acylcholine + H2O = a carboxylate + choline + H(+). In terms of biological role, esterase with broad substrate specificity. Contributes to the inactivation of the neurotransmitter acetylcholine. Can degrade neurotoxic organophosphate esters. This Macaca mulatta (Rhesus macaque) protein is Cholinesterase (BCHE).